The chain runs to 239 residues: Small ribosomal subunit protein uS3 (239 aa).

The KH type-2 domain occupies 39-107 (VRQVLRKKMS…PVHINVIEVR (69 aa)). The tract at residues 214–239 (SQEKQDDGSRGDRNADRSSRRSREVR) is disordered. Residues 216–239 (EKQDDGSRGDRNADRSSRRSREVR) show a composition bias toward basic and acidic residues.

This sequence belongs to the universal ribosomal protein uS3 family. In terms of assembly, part of the 30S ribosomal subunit. Forms a tight complex with proteins S10 and S14.

Its function is as follows. Binds the lower part of the 30S subunit head. Binds mRNA in the 70S ribosome, positioning it for translation. This Xylella fastidiosa (strain M23) protein is Small ribosomal subunit protein uS3.